We begin with the raw amino-acid sequence, 317 residues long: tRNA(Met) cytidine acetate ligase (317 aa).

ATP contacts are provided by residues 6–19, G100, N157, and R182; that span reads IAEY…HIYQ.

Belongs to the TmcAL family.

The protein localises to the cytoplasm. The catalysed reaction is cytidine(34) in elongator tRNA(Met) + acetate + ATP = N(4)-acetylcytidine(34) in elongator tRNA(Met) + AMP + diphosphate. Functionally, catalyzes the formation of N(4)-acetylcytidine (ac(4)C) at the wobble position of elongator tRNA(Met), using acetate and ATP as substrates. First activates an acetate ion to form acetyladenylate (Ac-AMP) and then transfers the acetyl group to tRNA to form ac(4)C34. This is tRNA(Met) cytidine acetate ligase from Mesomycoplasma hyopneumoniae (strain J / ATCC 25934 / NCTC 10110) (Mycoplasma hyopneumoniae).